Consider the following 371-residue polypeptide: tRNA-specific 2-thiouridylase MnmA (371 aa).

ATP contacts are provided by residues 22–29 (GLSGGVDS) and methionine 48. Residues 108–110 (NPD) are interaction with target base in tRNA. Cysteine 113 functions as the Nucleophile in the catalytic mechanism. A disulfide bridge connects residues cysteine 113 and cysteine 209. ATP is bound at residue glycine 137. Positions 159-161 (KDQ) are interaction with tRNA. The Cysteine persulfide intermediate role is filled by cysteine 209.

This sequence belongs to the MnmA/TRMU family.

It localises to the cytoplasm. The enzyme catalyses S-sulfanyl-L-cysteinyl-[protein] + uridine(34) in tRNA + AH2 + ATP = 2-thiouridine(34) in tRNA + L-cysteinyl-[protein] + A + AMP + diphosphate + H(+). In terms of biological role, catalyzes the 2-thiolation of uridine at the wobble position (U34) of tRNA, leading to the formation of s(2)U34. The polypeptide is tRNA-specific 2-thiouridylase MnmA (Coxiella burnetii (strain CbuG_Q212) (Coxiella burnetii (strain Q212))).